We begin with the raw amino-acid sequence, 162 residues long: SsrA-binding protein (162 aa).

The segment at Asp-140–Gly-162 is disordered.

The protein belongs to the SmpB family.

The protein resides in the cytoplasm. In terms of biological role, required for rescue of stalled ribosomes mediated by trans-translation. Binds to transfer-messenger RNA (tmRNA), required for stable association of tmRNA with ribosomes. tmRNA and SmpB together mimic tRNA shape, replacing the anticodon stem-loop with SmpB. tmRNA is encoded by the ssrA gene; the 2 termini fold to resemble tRNA(Ala) and it encodes a 'tag peptide', a short internal open reading frame. During trans-translation Ala-aminoacylated tmRNA acts like a tRNA, entering the A-site of stalled ribosomes, displacing the stalled mRNA. The ribosome then switches to translate the ORF on the tmRNA; the nascent peptide is terminated with the 'tag peptide' encoded by the tmRNA and targeted for degradation. The ribosome is freed to recommence translation, which seems to be the essential function of trans-translation. The protein is SsrA-binding protein of Roseobacter denitrificans (strain ATCC 33942 / OCh 114) (Erythrobacter sp. (strain OCh 114)).